Here is a 491-residue protein sequence, read N- to C-terminus: Trigger factor (491 aa).

The 86-residue stretch at 169–254 (GDRVTIDYLG…VKDVAAAAPI (86 aa)) folds into the PPIase FKBP-type domain. The interval 434–491 (KVSKEELTAEDDADEKPAKKTASKKKAAAKADAAEGEEAAAPKRKAPAKKKASDESAE) is disordered. Residues 452-461 (KKTASKKKAA) are compositionally biased toward basic residues.

It belongs to the FKBP-type PPIase family. Tig subfamily.

The protein resides in the cytoplasm. The catalysed reaction is [protein]-peptidylproline (omega=180) = [protein]-peptidylproline (omega=0). Functionally, involved in protein export. Acts as a chaperone by maintaining the newly synthesized protein in an open conformation. Functions as a peptidyl-prolyl cis-trans isomerase. This Sinorhizobium medicae (strain WSM419) (Ensifer medicae) protein is Trigger factor.